The primary structure comprises 408 residues: Peptidase T (408 aa).

His-78 is a binding site for Zn(2+). Asp-80 is an active-site residue. Asp-140 is a Zn(2+) binding site. Glu-173 functions as the Proton acceptor in the catalytic mechanism. Glu-174, Asp-196, and His-379 together coordinate Zn(2+).

Belongs to the peptidase M20B family. It depends on Zn(2+) as a cofactor.

Its subcellular location is the cytoplasm. It catalyses the reaction Release of the N-terminal residue from a tripeptide.. In terms of biological role, cleaves the N-terminal amino acid of tripeptides. This chain is Peptidase T, found in Shigella flexneri serotype 5b (strain 8401).